The chain runs to 393 residues: Branched-chain-amino-acid aminotransferase, mitochondrial (393 aa).

The N-terminal 27 residues, 1-27 (MSAAILGQVWTRKLLPIPWRLCVPGRC), are a transit peptide targeting the mitochondrion. Substrate is bound at residue tyrosine 169. Lysine 230 carries the post-translational modification N6-(pyridoxal phosphate)lysine. The residue at position 322 (lysine 322) is an N6-acetyllysine.

It belongs to the class-IV pyridoxal-phosphate-dependent aminotransferase family. As to quaternary structure, homodimer. Pyridoxal 5'-phosphate is required as a cofactor. Expressed in all tissues.

Its subcellular location is the mitochondrion. It carries out the reaction L-leucine + 2-oxoglutarate = 4-methyl-2-oxopentanoate + L-glutamate. The catalysed reaction is L-isoleucine + 2-oxoglutarate = (S)-3-methyl-2-oxopentanoate + L-glutamate. It catalyses the reaction L-valine + 2-oxoglutarate = 3-methyl-2-oxobutanoate + L-glutamate. Catalyzes the first reaction in the catabolism of the essential branched chain amino acids leucine, isoleucine, and valine. May also function as a transporter of branched chain alpha-keto acids. This is Branched-chain-amino-acid aminotransferase, mitochondrial (Bcat2) from Rattus norvegicus (Rat).